Consider the following 405-residue polypeptide: Potassium channel subfamily K member 13 (405 aa).

Over 1–19 (MAGRGCGCSPGHLNEDNAR) the chain is Cytoplasmic. The chain crosses the membrane as a helical span at residues 20–40 (FLLLAGLILLYLLGGAAVFSA). 2 N-linked (GlcNAc...) asparagine glycosylation sites follow: Asn-59 and Asn-65. Positions 95 to 115 (WDFTGAFYFVGTVVSTIGFGM) form an intramembrane region, pore-forming. 3 residues coordinate K(+): Thr-110, Ile-111, and Gly-112. Residues 110-115 (TIGFGM) form a selectivity filter 1 region. Residues 125 to 145 (IFLIFYGLIGCASTILFFNLF) traverse the membrane as a helical segment. Topologically, residues 146-193 (LERLITVIACVMRSCHQQQLRRRGAVTQDNMKAPEKGEADSLTGWKPS) are cytoplasmic. Residues 194–214 (VYYVMLILCLASVAISCGASA) form a helical membrane-spanning segment. Residues 224–244 (YFDSVYFCFVAFSTIGFGDLV) constitute an intramembrane region (pore-forming). Residues Thr-237, Ile-238, Gly-239, and Phe-240 each coordinate K(+). The tract at residues 237–242 (TIGFGD) is selectivity filter 2. The chain crosses the membrane as a helical span at residues 263–283 (FLILMGVCCIYSLFNVISILI). Topologically, residues 284 to 405 (KQTVNWILRK…NRLAETSGDR (122 aa)) are cytoplasmic.

It belongs to the two pore domain potassium channel (TC 1.A.1.8) family. As to quaternary structure, homodimer. Heterodimer with KCNK12.

It localises to the cell membrane. The enzyme catalyses K(+)(in) = K(+)(out). Its function is as follows. K(+) channel that conducts outward rectifying tonic currents potentiated by purinergic signals. Homo- and heterodimerizes to form functional channels with distinct regulatory and gating properties. Contributes most of K(+) currents at the plasma membrane of resting microglia. Maintains a depolarized membrane potential required for proper ramified microglia morphology and phagocytosis, selectively mediating microglial pruning of presynaptic compartments at hippocampal excitatory synapses. Upon local release of ATP caused by neuronal injury or infection, it is potentiated by P2RY12 and P2RX7 receptor signaling and contributes to ATP-triggered K(+) efflux underlying microglial NLRP3 inflammasome assembly and IL1B release. The protein is Potassium channel subfamily K member 13 of Mus musculus (Mouse).